A 365-amino-acid chain; its full sequence is UBX domain-containing protein 2B (365 aa).

Residues 1–97 form a disordered region; sequence MADGGASPAQ…MSDDKENQRF (97 aa). 2 stretches are compositionally biased toward basic and acidic residues: residues 50–63 and 73–95; these read DEAK…DKPT and LKID…KENQ. The region spanning 175-240 is the SEP domain; it reads DVQILLKLWR…MEDHQEQEYV (66 aa). Residues 286-363 enclose the UBX domain; the sequence is DSVPATKIQI…DILNTVILQQ (78 aa).

This sequence belongs to the NSFL1C family.

The protein resides in the nucleus. It is found in the cytoplasm. Its subcellular location is the cytosol. The protein localises to the endoplasmic reticulum. It localises to the golgi apparatus. The protein resides in the cytoskeleton. It is found in the microtubule organizing center. Its subcellular location is the centrosome. Functionally, adapter protein required for Golgi and endoplasmic reticulum biogenesis. Involved in Golgi and endoplasmic reticulum maintenance during interphase and in their reassembly at the end of mitosis. Regulates the centrosomal levels of kinase AURKA/Aurora A during mitotic progression by promoting AURKA removal from centrosomes in prophase. Also, regulates spindle orientation during mitosis. This Gallus gallus (Chicken) protein is UBX domain-containing protein 2B (UBXN2B).